The sequence spans 493 residues: Glycogen synthase 1 (493 aa).

Lys15 is a binding site for ADP-alpha-D-glucose.

Belongs to the glycosyltransferase 1 family. Bacterial/plant glycogen synthase subfamily.

The enzyme catalyses [(1-&gt;4)-alpha-D-glucosyl](n) + ADP-alpha-D-glucose = [(1-&gt;4)-alpha-D-glucosyl](n+1) + ADP + H(+). It functions in the pathway glycan biosynthesis; glycogen biosynthesis. Functionally, synthesizes alpha-1,4-glucan chains using ADP-glucose. This is Glycogen synthase 1 from Methylococcus capsulatus (strain ATCC 33009 / NCIMB 11132 / Bath).